We begin with the raw amino-acid sequence, 345 residues long: Phosphoribosylformylglycinamidine cyclo-ligase (345 aa).

Belongs to the AIR synthase family.

It localises to the cytoplasm. It carries out the reaction 2-formamido-N(1)-(5-O-phospho-beta-D-ribosyl)acetamidine + ATP = 5-amino-1-(5-phospho-beta-D-ribosyl)imidazole + ADP + phosphate + H(+). Its pathway is purine metabolism; IMP biosynthesis via de novo pathway; 5-amino-1-(5-phospho-D-ribosyl)imidazole from N(2)-formyl-N(1)-(5-phospho-D-ribosyl)glycinamide: step 2/2. The sequence is that of Phosphoribosylformylglycinamidine cyclo-ligase from Shewanella denitrificans (strain OS217 / ATCC BAA-1090 / DSM 15013).